The chain runs to 95 residues: Small ribosomal subunit protein bS6 (95 aa).

It belongs to the bacterial ribosomal protein bS6 family.

Functionally, binds together with bS18 to 16S ribosomal RNA. The chain is Small ribosomal subunit protein bS6 from Bacillus licheniformis (strain ATCC 14580 / DSM 13 / JCM 2505 / CCUG 7422 / NBRC 12200 / NCIMB 9375 / NCTC 10341 / NRRL NRS-1264 / Gibson 46).